The sequence spans 271 residues: MTVKQSQASRLGPIFEACRDDDRAALIGYLPTGYPDVPTSVQAMVALVESGCDIVEVGVPYSDPGMDGPTIARATEAALHGGVRVRDTLAAVEAISAAGGRAVVMTYWNPVLRYGVDAFARDLAAAGGYGLITPDLIPDEAGQWLAASERHGLDRIFLVAPSSTPQRLALTVEASRGFVYAASTMGVTGARDAVSHAAPELVSRVREISDIPVGVGLGVRSREQAAQIGGYADGVIVGSALVSALGDGGLTALRALTEELAAGVRQRAAAS.

Active-site proton acceptor residues include glutamate 56 and aspartate 67.

It belongs to the TrpA family. In terms of assembly, tetramer of two alpha and two beta chains.

It catalyses the reaction (1S,2R)-1-C-(indol-3-yl)glycerol 3-phosphate + L-serine = D-glyceraldehyde 3-phosphate + L-tryptophan + H2O. Its pathway is amino-acid biosynthesis; L-tryptophan biosynthesis; L-tryptophan from chorismate: step 5/5. In terms of biological role, the alpha subunit is responsible for the aldol cleavage of indoleglycerol phosphate to indole and glyceraldehyde 3-phosphate. The sequence is that of Tryptophan synthase alpha chain from Mycobacterium avium (strain 104).